The sequence spans 146 residues: SecB-like chaperone SmegB (146 aa).

It belongs to the SecB-like family.

Its function is as follows. Chaperone component of an orphan antitoxin chaperone (AC) system; there is no toxin gene in close genomic proximity. When expressed in E.coli complements the cold-sensitive phenotype of a secB deletion, suggesting it may have a generic chaperone function. Does not however complement the toxin-neutralizing effect of its M.tuberculosis paralog Rv1957 (AC P95257) in E.coli, probably because the antitoxin genes are not from the same family. The polypeptide is SecB-like chaperone SmegB (Mycolicibacterium smegmatis (strain ATCC 700084 / mc(2)155) (Mycobacterium smegmatis)).